Consider the following 117-residue polypeptide: NYGESGIVYPDGRLVQFTRAEADNIAEIGEAGVVMHDGTHVQFDRDMAAHHAGTPPQPMPVREMLAQPYGYSGIMKPDGNNRQFTAAESDNLVLVGPSGAVTADGKNVQFTDAGLPT.

4 consecutive repeat copies span residues 1–17, 26–43, 67–84, and 93–110.

Calcified shell.

The sequence is that of Cuticle protein CP1243 from Cancer pagurus (Rock crab).